A 201-amino-acid chain; its full sequence is Large ribosomal subunit protein uL4 (201 aa).

The tract at residues 45 to 72 (AQKTRAEVTGSGKKPWRQKGTGRARAGS) is disordered.

The protein belongs to the universal ribosomal protein uL4 family. In terms of assembly, part of the 50S ribosomal subunit.

One of the primary rRNA binding proteins, this protein initially binds near the 5'-end of the 23S rRNA. It is important during the early stages of 50S assembly. It makes multiple contacts with different domains of the 23S rRNA in the assembled 50S subunit and ribosome. Functionally, forms part of the polypeptide exit tunnel. This Shewanella frigidimarina (strain NCIMB 400) protein is Large ribosomal subunit protein uL4.